The primary structure comprises 149 residues: MKCPFCGHLETQVVETRISEDAEFIRRRRQCGACEKRFTTYERPDVSFPSIVKKDGRRTDYQRGKILGSMRLALRKRPVSTAQIDAAVEQIEEKLLSLGLREVASSRLGELVMLELKKLDKIAYIRFASVYRSFEDIDEFKTLVDEVGR.

A zinc finger lies at 3–34; it reads CPFCGHLETQVVETRISEDAEFIRRRRQCGAC. Positions 49–139 constitute an ATP-cone domain; it reads PSIVKKDGRR…VYRSFEDIDE (91 aa).

The protein belongs to the NrdR family. The cofactor is Zn(2+).

Its function is as follows. Negatively regulates transcription of bacterial ribonucleotide reductase nrd genes and operons by binding to NrdR-boxes. The protein is Transcriptional repressor NrdR of Polaromonas naphthalenivorans (strain CJ2).